Reading from the N-terminus, the 35-residue chain is Protein YbgU (35 aa).

The sequence is that of Protein YbgU from Escherichia coli (strain K12).